The following is a 140-amino-acid chain: Aspartate 1-decarboxylase (140 aa).

Catalysis depends on Ser-25, which acts as the Schiff-base intermediate with substrate; via pyruvic acid. Pyruvic acid (Ser) is present on Ser-25. Thr-57 contacts substrate. Residue Tyr-58 is the Proton donor of the active site. Residue 73 to 75 coordinates substrate; sequence GAA.

The protein belongs to the PanD family. In terms of assembly, heterooctamer of four alpha and four beta subunits. Pyruvate is required as a cofactor. Is synthesized initially as an inactive proenzyme, which is activated by self-cleavage at a specific serine bond to produce a beta-subunit with a hydroxyl group at its C-terminus and an alpha-subunit with a pyruvoyl group at its N-terminus.

It localises to the cytoplasm. It catalyses the reaction L-aspartate + H(+) = beta-alanine + CO2. It participates in cofactor biosynthesis; (R)-pantothenate biosynthesis; beta-alanine from L-aspartate: step 1/1. Catalyzes the pyruvoyl-dependent decarboxylation of aspartate to produce beta-alanine. This Persephonella marina (strain DSM 14350 / EX-H1) protein is Aspartate 1-decarboxylase.